The following is a 165-amino-acid chain: Chorismate pyruvate-lyase (165 aa).

Substrate-binding residues include Arg-77, Leu-115, and Glu-156.

It belongs to the UbiC family. In terms of assembly, monomer.

It is found in the cytoplasm. The enzyme catalyses chorismate = 4-hydroxybenzoate + pyruvate. It participates in cofactor biosynthesis; ubiquinone biosynthesis. In terms of biological role, removes the pyruvyl group from chorismate, with concomitant aromatization of the ring, to provide 4-hydroxybenzoate (4HB) for the ubiquinone pathway. This is Chorismate pyruvate-lyase from Salmonella typhi.